Here is a 142-residue protein sequence, read N- to C-terminus: Hemoglobin subunit alpha (142 aa).

The region spanning 2–142 is the Globin domain; that stretch reads VLSPTDKSNV…VSTVLTSKYR (141 aa). The residue at position 4 (Ser4) is a Phosphoserine. Lys8 and Lys12 each carry N6-succinyllysine. Position 17 is an N6-acetyllysine; alternate (Lys17). Residue Lys17 is modified to N6-succinyllysine; alternate. Tyr25 is subject to Phosphotyrosine. Residue Lys41 is modified to N6-succinyllysine. His59 is an O2 binding site. His88 is a heme b binding site. Ser103 is subject to Phosphoserine. The residue at position 109 (Thr109) is a Phosphothreonine. A phosphoserine mark is found at Ser125 and Ser132. A phosphothreonine mark is found at Thr135 and Thr138. Ser139 is subject to Phosphoserine.

Belongs to the globin family. Heterotetramer of two alpha chains and two beta chains. In terms of tissue distribution, red blood cells.

Functionally, involved in oxygen transport from the lung to the various peripheral tissues. Its function is as follows. Hemopressin acts as an antagonist peptide of the cannabinoid receptor CNR1. Hemopressin-binding efficiently blocks cannabinoid receptor CNR1 and subsequent signaling. This Balaenoptera acutorostrata (Common minke whale) protein is Hemoglobin subunit alpha (HBA).